The chain runs to 461 residues: MLTFIELLIGVVVIVGVARYIIKGYSATGVLFVGGLLLLIISAIMGHKVLPSSQASTGYSATDIVEYVKILLMSRGGDLGMMIMMLCGFAAYMTHIGANDMVVKLASKPLQYINSPYLLMIAAYFVACLMSLAVSSATGLGVLLMATLFPVMVNVGISRGAAAAICASPAAIILAPTSGDVVLAAQASEMSLIDFAFKTTLPISIAAIIGMAIAHFFWQRYLDKKEHISHEMLDVSEITTTAPAFYAILPFTPIIGVLIFDGKWGPQLHIITILVICMLIASILEFLRSFNTQKVFSGLEVAYRGMADAFANVVMLLVAAGVFAQGLSTIGFIQSLISIATSFGSASIILMLVLVILTMLAAVTTGSGNAPFYAFVEMIPKLAHSSGINPAYLTIPMLQASNLGRTLSPVSGVVVAVAGMAKISPFEVVKRTSVPVLVGLVIVIVATELMVPGTAAAVTGK.

The next 12 membrane-spanning stretches (helical) occupy residues 2 to 22 (LTFI…RYII), 26 to 46 (SATG…AIMG), 79 to 99 (LGMM…IGAN), 116 to 136 (PYLL…AVSS), 137 to 157 (ATGL…NVGI), 164 to 184 (AICA…VVLA), 199 to 219 (TTLP…FFWQ), 240 to 260 (TTAP…VLIF), 267 to 287 (QLHI…LEFL), 313 to 333 (VVML…IGFI), 343 to 363 (FGSA…LAAV), and 436 to 456 (VLVG…GTAA).

It belongs to the DcuC/DcuD transporter (TC 2.A.61) family.

Its subcellular location is the cell inner membrane. The catalysed reaction is fumarate(in) + succinate(out) = fumarate(out) + succinate(in). Responsible for the transport of C4-dicarboxylates during anaerobic growth. Catalyzes the uptake of fumarate coupled to the export of succinate. The chain is Anaerobic C4-dicarboxylate transporter DcuC (dcuC) from Escherichia coli O157:H7.